The following is a 319-amino-acid chain: Acetyl-coenzyme A carboxylase carboxyl transferase subunit alpha (319 aa).

The region spanning 39–293 (RLQKKSNDLT…KAVLEKQLHE (255 aa)) is the CoA carboxyltransferase C-terminal domain.

Belongs to the AccA family. In terms of assembly, acetyl-CoA carboxylase is a heterohexamer composed of biotin carboxyl carrier protein (AccB), biotin carboxylase (AccC) and two subunits each of ACCase subunit alpha (AccA) and ACCase subunit beta (AccD).

Its subcellular location is the cytoplasm. It carries out the reaction N(6)-carboxybiotinyl-L-lysyl-[protein] + acetyl-CoA = N(6)-biotinyl-L-lysyl-[protein] + malonyl-CoA. The protein operates within lipid metabolism; malonyl-CoA biosynthesis; malonyl-CoA from acetyl-CoA: step 1/1. Functionally, component of the acetyl coenzyme A carboxylase (ACC) complex. First, biotin carboxylase catalyzes the carboxylation of biotin on its carrier protein (BCCP) and then the CO(2) group is transferred by the carboxyltransferase to acetyl-CoA to form malonyl-CoA. This is Acetyl-coenzyme A carboxylase carboxyl transferase subunit alpha from Neisseria meningitidis serogroup C (strain 053442).